The following is a 362-amino-acid chain: Diphosphomevalonate decarboxylase (362 aa).

Residues 17-20 (YWGK), Arg-72, 150-155 (SGSACR), and Thr-206 each bind (R)-5-diphosphomevalonate.

This sequence belongs to the diphosphomevalonate decarboxylase family. Homodimer.

It catalyses the reaction (R)-5-diphosphomevalonate + ATP = isopentenyl diphosphate + ADP + phosphate + CO2. It participates in isoprenoid biosynthesis; isopentenyl diphosphate biosynthesis via mevalonate pathway; isopentenyl diphosphate from (R)-mevalonate: step 3/3. Diphosphomevalonate decarboxylase; part of the second module of ergosterol biosynthesis pathway that includes the middle steps of the pathway. MVD1 converts diphosphomevalonate into isopentenyl diphosphate. The second module is carried out in the vacuole and involves the formation of farnesyl diphosphate, which is also an important intermediate in the biosynthesis of ubiquinone, dolichol, heme and prenylated proteins. Activity by the mevalonate kinase ERG12 first converts mevalonate into 5-phosphomevalonate. 5-phosphomevalonate is then further converted to 5-diphosphomevalonate by the phosphomevalonate kinase ERG8. The diphosphomevalonate decarboxylase MVD then produces isopentenyl diphosphate. The isopentenyl-diphosphate delta-isomerase IDI1 then catalyzes the 1,3-allylic rearrangement of the homoallylic substrate isopentenyl (IPP) to its highly electrophilic allylic isomer, dimethylallyl diphosphate (DMAPP). Finally the farnesyl diphosphate synthase ERG20 catalyzes the sequential condensation of isopentenyl pyrophosphate with dimethylallyl pyrophosphate, and then with the resultant geranylpyrophosphate to the ultimate product farnesyl pyrophosphate. The protein is Diphosphomevalonate decarboxylase of Candida albicans (strain SC5314 / ATCC MYA-2876) (Yeast).